Here is a 370-residue protein sequence, read N- to C-terminus: Anhydro-N-acetylmuramic acid kinase (370 aa).

12 to 19 (GTSLDGVD) is a binding site for ATP.

The protein belongs to the anhydro-N-acetylmuramic acid kinase family.

The catalysed reaction is 1,6-anhydro-N-acetyl-beta-muramate + ATP + H2O = N-acetyl-D-muramate 6-phosphate + ADP + H(+). It functions in the pathway amino-sugar metabolism; 1,6-anhydro-N-acetylmuramate degradation. It participates in cell wall biogenesis; peptidoglycan recycling. Catalyzes the specific phosphorylation of 1,6-anhydro-N-acetylmuramic acid (anhMurNAc) with the simultaneous cleavage of the 1,6-anhydro ring, generating MurNAc-6-P. Is required for the utilization of anhMurNAc either imported from the medium or derived from its own cell wall murein, and thus plays a role in cell wall recycling. The chain is Anhydro-N-acetylmuramic acid kinase from Pectobacterium atrosepticum (strain SCRI 1043 / ATCC BAA-672) (Erwinia carotovora subsp. atroseptica).